Here is a 152-residue protein sequence, read N- to C-terminus: Heavy metal-associated isoprenylated plant protein 22 (152 aa).

Positions 28-91 constitute an HMA domain; it reads MQTVNIKVKI…TVQSTGKKKA (64 aa). A metal cation contacts are provided by cysteine 39 and cysteine 42. The tract at residues 123-152 is disordered; sequence SEQAQAQPGSTDDKLMSLFSDENPNACTVM. The span at 142–152 shows a compositional bias: polar residues; it reads SDENPNACTVM. A Cysteine methyl ester modification is found at cysteine 149. The S-farnesyl cysteine moiety is linked to residue cysteine 149. A propeptide spans 150-152 (removed in mature form); it reads TVM.

It belongs to the HIPP family. As to quaternary structure, interacts with ZHD11/HB29. Expressed in lateral roots and mature anthers.

The protein resides in the membrane. Functionally, heavy-metal-binding protein. Binds cadmium. May be involved in cadmium transport and play a role in cadmium detoxification. This Arabidopsis thaliana (Mouse-ear cress) protein is Heavy metal-associated isoprenylated plant protein 22.